A 184-amino-acid polypeptide reads, in one-letter code: Adenylate kinase (184 aa).

12–17 (GAGKGT) contributes to the ATP binding site. Residues 32–61 (STGELLRKEIDLDTDLGKQVKDIMNRGELV) are NMP. Residues Thr-33, Arg-38, 59–61 (ELV), 85–88 (GYPR), and Gln-92 contribute to the AMP site. The segment at 126–132 (IRGRKDD) is LID. Arg-127 lines the ATP pocket. AMP is bound by residues Arg-129 and Arg-140. Gly-168 serves as a coordination point for ATP.

This sequence belongs to the adenylate kinase family. As to quaternary structure, monomer.

The protein localises to the cytoplasm. It catalyses the reaction AMP + ATP = 2 ADP. It participates in purine metabolism; AMP biosynthesis via salvage pathway; AMP from ADP: step 1/1. Its function is as follows. Catalyzes the reversible transfer of the terminal phosphate group between ATP and AMP. Plays an important role in cellular energy homeostasis and in adenine nucleotide metabolism. The protein is Adenylate kinase of Prochlorococcus marinus subsp. pastoris (strain CCMP1986 / NIES-2087 / MED4).